Consider the following 255-residue polypeptide: Probable transcriptional regulatory protein PCC7424_2775 (255 aa).

Belongs to the TACO1 family.

It localises to the cytoplasm. The polypeptide is Probable transcriptional regulatory protein PCC7424_2775 (Gloeothece citriformis (strain PCC 7424) (Cyanothece sp. (strain PCC 7424))).